Here is a 289-residue protein sequence, read N- to C-terminus: Phosphatidylserine decarboxylase proenzyme (289 aa).

Catalysis depends on charge relay system; for autoendoproteolytic cleavage activity residues Asp-89, His-146, and Ser-252. Ser-252 acts as the Schiff-base intermediate with substrate; via pyruvic acid; for decarboxylase activity in catalysis. Position 252 is a pyruvic acid (Ser); by autocatalysis (Ser-252).

It belongs to the phosphatidylserine decarboxylase family. PSD-B subfamily. Prokaryotic type I sub-subfamily. In terms of assembly, heterodimer of a large membrane-associated beta subunit and a small pyruvoyl-containing alpha subunit. Pyruvate serves as cofactor. Post-translationally, is synthesized initially as an inactive proenzyme. Formation of the active enzyme involves a self-maturation process in which the active site pyruvoyl group is generated from an internal serine residue via an autocatalytic post-translational modification. Two non-identical subunits are generated from the proenzyme in this reaction, and the pyruvate is formed at the N-terminus of the alpha chain, which is derived from the carboxyl end of the proenzyme. The autoendoproteolytic cleavage occurs by a canonical serine protease mechanism, in which the side chain hydroxyl group of the serine supplies its oxygen atom to form the C-terminus of the beta chain, while the remainder of the serine residue undergoes an oxidative deamination to produce ammonia and the pyruvoyl prosthetic group on the alpha chain. During this reaction, the Ser that is part of the protease active site of the proenzyme becomes the pyruvoyl prosthetic group, which constitutes an essential element of the active site of the mature decarboxylase.

It localises to the cell membrane. It carries out the reaction a 1,2-diacyl-sn-glycero-3-phospho-L-serine + H(+) = a 1,2-diacyl-sn-glycero-3-phosphoethanolamine + CO2. It participates in phospholipid metabolism; phosphatidylethanolamine biosynthesis; phosphatidylethanolamine from CDP-diacylglycerol: step 2/2. In terms of biological role, catalyzes the formation of phosphatidylethanolamine (PtdEtn) from phosphatidylserine (PtdSer). The chain is Phosphatidylserine decarboxylase proenzyme from Nitrosospira multiformis (strain ATCC 25196 / NCIMB 11849 / C 71).